A 301-amino-acid chain; its full sequence is Mycothiol acetyltransferase (301 aa).

2 consecutive N-acetyltransferase domains span residues 6 to 151 (EWRQ…ILRD) and 153 to 301 (VSLR…QYGR). 79-81 (LFV) contributes to the acetyl-CoA binding site. Glu180, Lys219, and Glu235 together coordinate 1D-myo-inositol 2-(L-cysteinylamino)-2-deoxy-alpha-D-glucopyranoside. Residues 239-241 (VGV) and 246-252 (QGGGLGR) contribute to the acetyl-CoA site. Tyr273 contributes to the 1D-myo-inositol 2-(L-cysteinylamino)-2-deoxy-alpha-D-glucopyranoside binding site.

The protein belongs to the acetyltransferase family. MshD subfamily. In terms of assembly, monomer.

The enzyme catalyses 1D-myo-inositol 2-(L-cysteinylamino)-2-deoxy-alpha-D-glucopyranoside + acetyl-CoA = mycothiol + CoA + H(+). Its function is as follows. Catalyzes the transfer of acetyl from acetyl-CoA to desacetylmycothiol (Cys-GlcN-Ins) to form mycothiol. This is Mycothiol acetyltransferase from Amycolatopsis mediterranei (strain U-32).